A 525-amino-acid polypeptide reads, in one-letter code: GMP synthase [glutamine-hydrolyzing] (525 aa).

The Glutamine amidotransferase type-1 domain maps to Arg-9–Leu-207. The Nucleophile role is filled by Cys-86. Residues His-181 and Glu-183 contribute to the active site. Residues Trp-208–Arg-400 form the GMPS ATP-PPase domain. Ser-235–Ser-241 provides a ligand contact to ATP.

In terms of assembly, homodimer.

It catalyses the reaction XMP + L-glutamine + ATP + H2O = GMP + L-glutamate + AMP + diphosphate + 2 H(+). The protein operates within purine metabolism; GMP biosynthesis; GMP from XMP (L-Gln route): step 1/1. Its function is as follows. Catalyzes the synthesis of GMP from XMP. This Cellvibrio japonicus (strain Ueda107) (Pseudomonas fluorescens subsp. cellulosa) protein is GMP synthase [glutamine-hydrolyzing].